The chain runs to 158 residues: MEMQDQSKINLGIVVSEFNYDITSLMLQRALSHAEFLGVTVKVVVKVPGSYDMAVIVKELLKRDEIDGVVTLGAVIKGETKHDEIVATQTARKLMDLSVEYGKPVTLGIIGHGVTHEQAVERIEEYSMRAVESAVKLIKRLKKLREIDLTKETNVSIE.

Residues F18, 50 to 52 (SYD), and 74 to 76 (AVI) contribute to the 5-amino-6-(D-ribitylamino)uracil site. A (2S)-2-hydroxy-3-oxobutyl phosphate-binding site is contributed by 79–80 (ET). The Proton donor role is filled by H82. 5-amino-6-(D-ribitylamino)uracil is bound at residue L107. R122 serves as a coordination point for (2S)-2-hydroxy-3-oxobutyl phosphate.

Belongs to the DMRL synthase family.

The catalysed reaction is (2S)-2-hydroxy-3-oxobutyl phosphate + 5-amino-6-(D-ribitylamino)uracil = 6,7-dimethyl-8-(1-D-ribityl)lumazine + phosphate + 2 H2O + H(+). It participates in cofactor biosynthesis; riboflavin biosynthesis; riboflavin from 2-hydroxy-3-oxobutyl phosphate and 5-amino-6-(D-ribitylamino)uracil: step 1/2. In terms of biological role, catalyzes the formation of 6,7-dimethyl-8-ribityllumazine by condensation of 5-amino-6-(D-ribitylamino)uracil with 3,4-dihydroxy-2-butanone 4-phosphate. This is the penultimate step in the biosynthesis of riboflavin. The chain is 6,7-dimethyl-8-ribityllumazine synthase from Sulfolobus acidocaldarius (strain ATCC 33909 / DSM 639 / JCM 8929 / NBRC 15157 / NCIMB 11770).